Consider the following 118-residue polypeptide: uncharacterized protein (118 aa).

The helical transmembrane segment at 7-27 (LLTGLFVGGIIGGAAVLLTAP) threads the bilayer. Residues 31 to 118 (KQLREKMKTN…IRQLEKTLQN (88 aa)) adopt a coiled-coil conformation.

It localises to the cell membrane. This is an uncharacterized protein from Bacillus subtilis (strain 168).